Here is a 159-residue protein sequence, read N- to C-terminus: Ribosome maturation factor RimP (159 aa).

This sequence belongs to the RimP family.

It is found in the cytoplasm. In terms of biological role, required for maturation of 30S ribosomal subunits. In Lacticaseibacillus casei (strain BL23) (Lactobacillus casei), this protein is Ribosome maturation factor RimP.